The following is a 156-amino-acid chain: Small ribosomal subunit protein uS7 (156 aa).

The protein belongs to the universal ribosomal protein uS7 family. As to quaternary structure, part of the 30S ribosomal subunit. Contacts proteins S9 and S11.

In terms of biological role, one of the primary rRNA binding proteins, it binds directly to 16S rRNA where it nucleates assembly of the head domain of the 30S subunit. Is located at the subunit interface close to the decoding center, probably blocks exit of the E-site tRNA. This is Small ribosomal subunit protein uS7 from Tropheryma whipplei (strain TW08/27) (Whipple's bacillus).